The chain runs to 318 residues: Formimidoylglutamase (318 aa).

Residues H124, D153, H155, D157, C241, and D243 each contribute to the Mn(2+) site.

Belongs to the arginase family. Mn(2+) is required as a cofactor.

It catalyses the reaction N-formimidoyl-L-glutamate + H2O = formamide + L-glutamate. The protein operates within amino-acid degradation; L-histidine degradation into L-glutamate; L-glutamate from N-formimidoyl-L-glutamate (hydrolase route): step 1/1. In terms of biological role, catalyzes the conversion of N-formimidoyl-L-glutamate to L-glutamate and formamide. In Fusobacterium nucleatum subsp. nucleatum (strain ATCC 25586 / DSM 15643 / BCRC 10681 / CIP 101130 / JCM 8532 / KCTC 2640 / LMG 13131 / VPI 4355), this protein is Formimidoylglutamase.